Consider the following 425-residue polypeptide: Adenylosuccinate synthetase (425 aa).

Residues 12–18 (GDEGKAK) and 40–42 (GHT) each bind GTP. Asp13 (proton acceptor) is an active-site residue. Residues Asp13 and Gly40 each contribute to the Mg(2+) site. IMP contacts are provided by residues 13-16 (DEGK), 38-41 (NAGH), Thr130, Arg144, Gln224, Thr239, and Arg303. Residue His41 is the Proton donor of the active site. 299–305 (ATTGRPR) lines the substrate pocket. Residues Arg305, 331 to 333 (KID), and 411 to 413 (STG) contribute to the GTP site.

Belongs to the adenylosuccinate synthetase family. In terms of assembly, homodimer. It depends on Mg(2+) as a cofactor.

It localises to the cytoplasm. It catalyses the reaction IMP + L-aspartate + GTP = N(6)-(1,2-dicarboxyethyl)-AMP + GDP + phosphate + 2 H(+). It participates in purine metabolism; AMP biosynthesis via de novo pathway; AMP from IMP: step 1/2. Plays an important role in the de novo pathway of purine nucleotide biosynthesis. Catalyzes the first committed step in the biosynthesis of AMP from IMP. In Leptospira interrogans serogroup Icterohaemorrhagiae serovar copenhageni (strain Fiocruz L1-130), this protein is Adenylosuccinate synthetase.